The primary structure comprises 730 residues: MQAKKRYLILFSAGVCLILLFYLQGPASRRTPKRGDDPHPHWPHFSDPLRAFIPWDQTETEDYNVRASPRHKRDDSTGADKCRMDSCFDFELCKRNGFKVYVYPQQKGEKISESYQNILSSIEGSRFYTSDPGQACLFVLNLDTLDRDQLSPQYVHNLKTKIQNLNLWNNGRNHLIFNLYSGTWPDYTEDLGFDIGQAMLAKASISTESFRPNFDISIPLFSKDHPRTGGERGFLKYNTIPPFRKYMLVFKGKRYLTGIGSDTRNALYHIHNAEDVVLLTTCKHGKDWQKHKDARCDKDNAEYDRYDYKEMLHNSTFCLVPRGRRLGSFRFLEALQAACVPVMLSNGWELPFSEIIDWRTAAVIGDERLLLQIPSTVRSIHQDRILSLRQQTQFLWEAYFSSVEKIVLTTLEIIQDRVLQHSAHSTLMWNRLPGGLFTLPQYSSYLGDFPFFYALLGIKPHQKFTAVIHAVTPLVSQSQPIFKLLVAVAKSQFCAQIMVLWNCDKPLPSKHRWPATSVPVIVIEGESKVMSSRFLPYENIITDAVLSLDEDTVLSTTEVDFAFTVWQSFPERIVGYPARSHFWDSNKERWGYTSKWTNDYSMVLTGAAFYHRYYNYLYTHYLPGSLKGLVDQLSNCEDILMNFLVSAVTKMPPIKVTQKKQYKETMMGQTSRASRWADPDHFAQRQTCMNKFASWFGTMPLVHSQMRLDPVLFRDQVSILRKKYRDIERL.

Residues 1–6 (MQAKKR) lie on the Cytoplasmic side of the membrane. Residues 7 to 27 (YLILFSAGVCLILLFYLQGPA) form a helical; Signal-anchor for type II membrane protein membrane-spanning segment. Residues 28–730 (SRRTPKRGDD…RKKYRDIERL (703 aa)) are Lumenal-facing. Asn314 is a glycosylation site (N-linked (GlcNAc...) asparagine). Positions 533, 549, 550, 551, 637, 638, and 685 each coordinate UDP-N-acetyl-alpha-D-glucosamine. Asp551 contributes to the Mn(2+) binding site. A disulfide bridge links Cys636 with Cys688. Asp638 is a catalytic residue.

The protein belongs to the glycosyltransferase 47 family. It depends on Mn(2+) as a cofactor.

The protein localises to the endoplasmic reticulum membrane. It carries out the reaction 3-O-{[(1-&gt;4)-beta-D-GlcA-(1-&gt;4)-alpha-D-GlcNAc](n)-(1-&gt;4)-beta-D-GlcA-(1-&gt;3)-beta-D-Gal-(1-&gt;3)-beta-D-Gal-(1-&gt;4)-beta-D-Xyl}-L-seryl-[protein] + UDP-N-acetyl-alpha-D-glucosamine = 3-O-{alpha-D-GlcNAc-[(1-&gt;4)-beta-D-GlcA-(1-&gt;4)-alpha-D-GlcNAc](n)-(1-&gt;4)-beta-D-GlcA-(1-&gt;3)-beta-D-Gal-(1-&gt;3)-beta-D-Gal-(1-&gt;4)-beta-D-Xyl}-L-seryl-[protein] + UDP + H(+). It catalyses the reaction 3-O-{alpha-D-GlcNAc-[(1-&gt;4)-beta-D-GlcA-(1-&gt;4)-alpha-D-GlcNAc](n)-(1-&gt;4)-beta-D-GlcA-(1-&gt;3)-beta-D-Gal-(1-&gt;3)-beta-D-Gal-(1-&gt;4)-beta-D-Xyl}-L-seryl-[protein] + UDP-alpha-D-glucuronate = 3-O-{[(1-&gt;4)-beta-D-GlcA-(1-&gt;4)-alpha-D-GlcNAc](n+1)-(1-&gt;4)-beta-D-GlcA-(1-&gt;3)-beta-D-Gal-(1-&gt;3)-beta-D-Gal-(1-&gt;4)-beta-D-Xyl}-L-seryl-[protein] + UDP + H(+). It functions in the pathway protein modification; protein glycosylation. Its function is as follows. Glycosyltransferase required for the biosynthesis of heparan-sulfate. The polypeptide is Exostosin-1a (ext1a) (Danio rerio (Zebrafish)).